The primary structure comprises 320 residues: ATP-dependent 6-phosphofructokinase (320 aa).

Gly12 lines the ATP pocket. Residues 22–26 (RGVVR) and 55–60 (RYSVSD) contribute to the ADP site. Residues 73 to 74 (RF) and 103 to 106 (GDGS) each bind ATP. Residue Asp104 participates in Mg(2+) binding. Substrate is bound at residue 126–128 (TID). The active-site Proton acceptor is Asp128. Arg155 provides a ligand contact to ADP. Substrate-binding positions include Arg163 and 170–172 (MGR). Residues 186 to 188 (GCE), Lys212, and 214 to 216 (KKH) each bind ADP. Residues Glu223, Arg244, and 250–253 (HIQR) contribute to the substrate site.

The protein belongs to the phosphofructokinase type A (PFKA) family. ATP-dependent PFK group I subfamily. Prokaryotic clade 'B1' sub-subfamily. Homotetramer. Mg(2+) serves as cofactor.

It localises to the cytoplasm. It carries out the reaction beta-D-fructose 6-phosphate + ATP = beta-D-fructose 1,6-bisphosphate + ADP + H(+). Its pathway is carbohydrate degradation; glycolysis; D-glyceraldehyde 3-phosphate and glycerone phosphate from D-glucose: step 3/4. Its activity is regulated as follows. Allosterically activated by ADP and other diphosphonucleosides, and allosterically inhibited by phosphoenolpyruvate. In terms of biological role, catalyzes the phosphorylation of D-fructose 6-phosphate to fructose 1,6-bisphosphate by ATP, the first committing step of glycolysis. The protein is ATP-dependent 6-phosphofructokinase of Klebsiella pneumoniae (strain 342).